The primary structure comprises 345 residues: Phosphoribosylformylglycinamidine cyclo-ligase (345 aa).

It belongs to the AIR synthase family.

It localises to the cytoplasm. It catalyses the reaction 2-formamido-N(1)-(5-O-phospho-beta-D-ribosyl)acetamidine + ATP = 5-amino-1-(5-phospho-beta-D-ribosyl)imidazole + ADP + phosphate + H(+). Its pathway is purine metabolism; IMP biosynthesis via de novo pathway; 5-amino-1-(5-phospho-D-ribosyl)imidazole from N(2)-formyl-N(1)-(5-phospho-D-ribosyl)glycinamide: step 2/2. The polypeptide is Phosphoribosylformylglycinamidine cyclo-ligase (Prochlorococcus marinus (strain MIT 9211)).